The chain runs to 275 residues: Large ribosomal subunit protein uL2 (275 aa).

Positions 222-257 (GTAMNAVDHPHGGGRGRSKGNNQPRSPWNQPAKGFK) are disordered. The segment covering 240-250 (KGNNQPRSPWN) has biased composition (polar residues).

It belongs to the universal ribosomal protein uL2 family. In terms of assembly, part of the 50S ribosomal subunit. Forms a bridge to the 30S subunit in the 70S ribosome.

In terms of biological role, one of the primary rRNA binding proteins. Required for association of the 30S and 50S subunits to form the 70S ribosome, for tRNA binding and peptide bond formation. It has been suggested to have peptidyltransferase activity; this is somewhat controversial. Makes several contacts with the 16S rRNA in the 70S ribosome. The chain is Large ribosomal subunit protein uL2 from Endomicrobium trichonymphae.